The primary structure comprises 63 residues: Large ribosomal subunit protein bL28 (63 aa).

The protein belongs to the bacterial ribosomal protein bL28 family.

The chain is Large ribosomal subunit protein bL28 from Kosmotoga olearia (strain ATCC BAA-1733 / DSM 21960 / TBF 19.5.1).